A 213-amino-acid chain; its full sequence is A-type ATP synthase subunit D (213 aa).

Belongs to the V-ATPase D subunit family. As to quaternary structure, has multiple subunits with at least A(3), B(3), C, D, E, F, H, I and proteolipid K(x).

It localises to the cell membrane. Its function is as follows. Component of the A-type ATP synthase that produces ATP from ADP in the presence of a proton gradient across the membrane. This chain is A-type ATP synthase subunit D, found in Saccharolobus islandicus (strain Y.N.15.51 / Yellowstone #2) (Sulfolobus islandicus).